The primary structure comprises 230 residues: RING finger protein 141 (230 aa).

G2 is lipidated: N-myristoyl glycine. Residues 155–192 (CCICMDGRADLILPCAHSFCQKCIDKWSDRHRNCPICR) form an RING-type zinc finger.

Isoform 1 is testis-specific. Isoform 2 is expressed in heart, brain, skeletal muscle, kidney, pancreas, lung, liver and testis. Isoform 3 is expressed in heart, liver, and kidney.

The protein localises to the membrane. In terms of biological role, may be involved in spermatogenesis. In Mus musculus (Mouse), this protein is RING finger protein 141 (Rnf141).